The following is a 266-amino-acid chain: Putative carbamate hydrolase RutD (266 aa).

It belongs to the AB hydrolase superfamily. Hydrolase RutD family.

It catalyses the reaction carbamate + 2 H(+) = NH4(+) + CO2. In terms of biological role, involved in pyrimidine catabolism. May facilitate the hydrolysis of carbamate, a reaction that can also occur spontaneously. The protein is Putative carbamate hydrolase RutD of Escherichia coli O103:H2 (strain 12009 / EHEC).